The primary structure comprises 344 residues: UDP-3-O-acylglucosamine N-acyltransferase (344 aa).

Catalysis depends on His-244, which acts as the Proton acceptor.

This sequence belongs to the transferase hexapeptide repeat family. LpxD subfamily. In terms of assembly, homotrimer.

The enzyme catalyses a UDP-3-O-[(3R)-3-hydroxyacyl]-alpha-D-glucosamine + a (3R)-hydroxyacyl-[ACP] = a UDP-2-N,3-O-bis[(3R)-3-hydroxyacyl]-alpha-D-glucosamine + holo-[ACP] + H(+). It functions in the pathway bacterial outer membrane biogenesis; LPS lipid A biosynthesis. Catalyzes the N-acylation of UDP-3-O-acylglucosamine using 3-hydroxyacyl-ACP as the acyl donor. Is involved in the biosynthesis of lipid A, a phosphorylated glycolipid that anchors the lipopolysaccharide to the outer membrane of the cell. The chain is UDP-3-O-acylglucosamine N-acyltransferase from Pseudoalteromonas atlantica (strain T6c / ATCC BAA-1087).